The primary structure comprises 176 residues: Large ribosomal subunit protein uL6 (176 aa).

This sequence belongs to the universal ribosomal protein uL6 family. In terms of assembly, part of the 50S ribosomal subunit.

In terms of biological role, this protein binds to the 23S rRNA, and is important in its secondary structure. It is located near the subunit interface in the base of the L7/L12 stalk, and near the tRNA binding site of the peptidyltransferase center. The chain is Large ribosomal subunit protein uL6 from Burkholderia lata (strain ATCC 17760 / DSM 23089 / LMG 22485 / NCIMB 9086 / R18194 / 383).